The chain runs to 101 residues: Cyanovirin-N (101 aa).

Intrachain disulfides connect Cys-8–Cys-22 and Cys-58–Cys-73.

The protein belongs to the cyanovirin-N family. In terms of assembly, in solution exists as a metastable domain-swapped homodimer which very slowly converts into a more stable monomeric form at room temperature. Under physiological conditions it is unlikely that the dimeric species exists and indeed the monomer is more active against HIV. Interacts with HIV-1 gp120. In terms of processing, cleavage, or reduction and alkylation of the disulfide bonds results in the loss of anti-HIV activity.

In terms of biological role, mannose-binding lectin. This Nostoc ellipsosporum protein is Cyanovirin-N.